The sequence spans 1116 residues: Electrogenic sodium bicarbonate cotransporter 4 (1116 aa).

Positions 1 to 14 (MKVDEEKAGVKKLD) are enriched in basic and acidic residues. 3 disordered regions span residues 1–92 (MKVD…TRSP), 222–257 (PIHRSLADIGKSVSTTNRSSARSSSAGPTLHRSTED), and 431–467 (PGQMNGSVGGGGASAGGGGSGGGAGGSGAGGVGSGDE). The Cytoplasmic segment spans residues 1 to 515 (MKVDEEKAGV…YDGFHLQSIS (515 aa)). The segment covering 233–247 (SVSTTNRSSARSSSA) has biased composition (low complexity). Positions 437–464 (SVGGGGASAGGGGSGGGAGGSGAGGVGS) are enriched in gly residues. Residues 516–536 (AVLFIYLGCITNAITFGGLLG) traverse the membrane as a helical segment. The Extracellular portion of the chain corresponds to 537–558 (DATDNYQGVMESFLGTAMAGSL). The helical transmembrane segment at 559–579 (FCLFSGQPLIILSSTGPILIF) threads the bilayer. Topologically, residues 580–600 (EKLLFDFSKANGLDYMEFRLW) are cytoplasmic. Residues 601–621 (IGLHSAIQCLILVATDASFII) traverse the membrane as a helical segment. Residues 622-631 (KYITRFTEEG) are Extracellular-facing. Residues 632 to 652 (FSTLISFIFIYDAIKKMIGAF) form a helical membrane-spanning segment. At 653-730 (KYYPINTDFK…GGRLLGSSCQ (78 aa)) the chain is on the cytoplasmic side. Residues 731 to 751 (FVPDLALMSFILFFGTYSMTL) form a helical membrane-spanning segment. Over 752 to 768 (TLKKFKFSRYFPTKVRT) the chain is Extracellular. Residues 769-789 (LVADFSIVFSILLFCGIDACF) traverse the membrane as a helical segment. The Cytoplasmic portion of the chain corresponds to 790–819 (GLQTPKLHVPSVIKPTRPDRGWFVAPFGKN). The chain crosses the membrane as a helical span at residues 820–840 (PWWVYPASILPALLVTILIFM). The Extracellular portion of the chain corresponds to 841–865 (DQQITAVIVNRKENKLRKAAGYHLD). The chain crosses the membrane as a helical span at residues 866–886 (LFWVGILMALCSFTGLPWYVA). The Cytoplasmic portion of the chain corresponds to 887 to 922 (ATVISIAHIDSLKMETETSAPGEQPQFLGVREQRVT). A helical transmembrane segment spans residues 923–943 (GVMVFILTGISVFLAPILKYI). Topologically, residues 944–945 (PM) are extracellular. Residues 946–966 (PVLYGVFLYMGVASLNGIQFW) traverse the membrane as a helical segment. Residues 967–987 (ERCKLFLMPAKHQPDHAFLRH) are Cytoplasmic-facing. 2 consecutive transmembrane segments (helical) span residues 988 to 1008 (VPLRRIHLFTLVQILCLALLW) and 1009 to 1029 (ILKSTMAAIIFPVMILGLIIV). Residues 1030 to 1116 (RRLLDLIFSQ…KRSSSWSYSL (87 aa)) are Cytoplasmic-facing.

This sequence belongs to the anion exchanger (TC 2.A.31) family.

It localises to the apical cell membrane. The protein resides in the basolateral cell membrane. The enzyme catalyses 2 hydrogencarbonate(out) + Na(+)(out) = 2 hydrogencarbonate(in) + Na(+)(in). It catalyses the reaction 3 hydrogencarbonate(out) + Na(+)(out) = 3 hydrogencarbonate(in) + Na(+)(in). Mediates sodium- and bicarbonate-dependent electrogenic sodium bicarbonate cotransport, with a Na(+):HCO3(-) stoichiometry varying from 1:2 to 1:3. This Mus musculus (Mouse) protein is Electrogenic sodium bicarbonate cotransporter 4 (Slc4a5).